Here is a 214-residue protein sequence, read N- to C-terminus: Adenylate kinase (214 aa).

10–15 is an ATP binding site; the sequence is GAGKGT. The tract at residues 30–59 is NMP; that stretch reads STGDMLRAAVKAGSELGKQAKAIMDAGKLV. AMP-binding positions include Thr31, Arg36, 57-59, 85-88, and Gln92; these read KLV and GFPR. The LID stretch occupies residues 122–159; sequence GRRVHPGSGRVYHVKFNPPQVEGKDDVTGEDLMTRKDD. Residues Arg123 and 132 to 133 each bind ATP; that span reads VY. Residues Arg156 and Arg167 each contribute to the AMP site. Gln200 serves as a coordination point for ATP.

This sequence belongs to the adenylate kinase family. In terms of assembly, monomer.

It is found in the cytoplasm. The catalysed reaction is AMP + ATP = 2 ADP. It functions in the pathway purine metabolism; AMP biosynthesis via salvage pathway; AMP from ADP: step 1/1. Catalyzes the reversible transfer of the terminal phosphate group between ATP and AMP. Plays an important role in cellular energy homeostasis and in adenine nucleotide metabolism. This is Adenylate kinase from Edwardsiella ictaluri (strain 93-146).